The primary structure comprises 413 residues: Putative competence-damage inducible protein (413 aa).

It belongs to the CinA family.

The chain is Putative competence-damage inducible protein from Alkaliphilus oremlandii (strain OhILAs) (Clostridium oremlandii (strain OhILAs)).